The primary structure comprises 287 residues: ADP-dependent (S)-NAD(P)H-hydrate dehydratase (287 aa).

The YjeF C-terminal domain maps to 7–283 (TTALVKKFIP…PEISTVMKPF (277 aa)). 2 residues coordinate (6S)-NADPHX: A42 and H159. Residues 196 to 200 (KGSTD) and G224 contribute to the AMP site. D225 lines the (6S)-NADPHX pocket.

The protein belongs to the NnrD/CARKD family. In terms of assembly, homotetramer. Requires Mg(2+) as cofactor.

The catalysed reaction is (6S)-NADHX + ADP = AMP + phosphate + NADH + H(+). It carries out the reaction (6S)-NADPHX + ADP = AMP + phosphate + NADPH + H(+). Functionally, catalyzes the dehydration of the S-form of NAD(P)HX at the expense of ADP, which is converted to AMP. Together with NAD(P)HX epimerase, which catalyzes the epimerization of the S- and R-forms, the enzyme allows the repair of both epimers of NAD(P)HX, a damaged form of NAD(P)H that is a result of enzymatic or heat-dependent hydration. The sequence is that of ADP-dependent (S)-NAD(P)H-hydrate dehydratase from Nitrosopumilus maritimus (strain SCM1).